Consider the following 103-residue polypeptide: Histone H4 (103 aa).

Residues 1–14 (MSGRGKGGKGLGKG) show a composition bias toward gly residues. The interval 1 to 20 (MSGRGKGGKGLGKGGAKRHR) is disordered. N6-acetyl-N6-methyllysine; alternate is present on lysine 6. Lysine 6, lysine 9, and lysine 13 each carry N6-methyllysine; alternate. Lysine 13 bears the N6-acetyl-N6-methyllysine; alternate mark. A DNA-binding region spans residues 17-21 (KRHRK). At lysine 92 the chain carries N6-glutaryllysine.

This sequence belongs to the histone H4 family. The nucleosome is a histone octamer containing two molecules each of H2A, H2B, H3 and H4 assembled in one H3-H4 heterotetramer and two H2A-H2B heterodimers. The octamer wraps approximately 147 bp of DNA. Post-translationally, glutarylation at Lys-92 (H4K91glu) destabilizes nucleosomes by promoting dissociation of the H2A-H2B dimers from nucleosomes.

It is found in the nucleus. The protein resides in the chromosome. Functionally, core component of nucleosome. Nucleosomes wrap and compact DNA into chromatin, limiting DNA accessibility to the cellular machineries which require DNA as a template. Histones thereby play a central role in transcription regulation, DNA repair, DNA replication and chromosomal stability. DNA accessibility is regulated via a complex set of post-translational modifications of histones, also called histone code, and nucleosome remodeling. The polypeptide is Histone H4 (HHF1) (Candida glabrata (strain ATCC 2001 / BCRC 20586 / JCM 3761 / NBRC 0622 / NRRL Y-65 / CBS 138) (Yeast)).